An 82-amino-acid chain; its full sequence is Turripeptide Gsp9.2 (82 aa).

The N-terminal stretch at 1-23 (MMAKLMITVMMVLLLSLQQGADG) is a signal peptide. A propeptide spanning residues 24-46 (RSERWRKNQMAASSIMRNLITAR) is cleaved from the precursor. 4-hydroxyproline is present on residues Pro-49 and Pro-50. Cystine bridges form between Cys-53–Cys-68, Cys-58–Cys-72, and Cys-64–Cys-79. Glu-56 is modified (4-carboxyglutamate).

The protein belongs to the Pg turripeptide superfamily. Expressed by the venom duct.

Its subcellular location is the secreted. This is Turripeptide Gsp9.2 from Gemmula speciosa (Splendid gem-turris).